The sequence spans 332 residues: Solute carrier family 25 member 16 (332 aa).

Solcar repeat units lie at residues 34–120, 128–216, and 238–328; these read FYWL…YKTF, SGHV…LKSV, and LKTH…MKQF. The next 6 membrane-spanning stretches (helical) occupy residues 37-57, 88-108, 134-154, 191-211, 244-264, and 299-319; these read LRSF…VAPL, GYLG…PYGA, LMAG…LDVV, GLMP…FTFG, LLCG…FDVT, and GLYR…AVAF.

This sequence belongs to the mitochondrial carrier (TC 2.A.29) family.

It localises to the mitochondrion inner membrane. May be involved in the transport of coenzyme A in the mitochondrial matrix. Very little is known about the physiological function of this carrier. The chain is Solute carrier family 25 member 16 from Mus musculus (Mouse).